The following is a 66-amino-acid chain: Large ribosomal subunit protein bL35 (66 aa).

It belongs to the bacterial ribosomal protein bL35 family.

This chain is Large ribosomal subunit protein bL35, found in Thermomicrobium roseum (strain ATCC 27502 / DSM 5159 / P-2).